The chain runs to 138 residues: Basic phospholipase A2 DAV-N6 (138 aa).

An N-terminal signal peptide occupies residues 1 to 16; it reads MRTLWIVAVLLVSVEG. 7 cysteine pairs are disulfide-bonded: Cys42/Cys131, Cys44/Cys60, Cys59/Cys111, Cys65/Cys138, Cys66/Cys104, Cys73/Cys97, and Cys91/Cys102. Ca(2+) is bound by residues Tyr43, Gly45, and Gly47. His63 is an active-site residue. Asp64 lines the Ca(2+) pocket. The active site involves Asp105.

Requires Ca(2+) as cofactor. In terms of tissue distribution, expressed by the venom gland.

The protein localises to the secreted. It carries out the reaction a 1,2-diacyl-sn-glycero-3-phosphocholine + H2O = a 1-acyl-sn-glycero-3-phosphocholine + a fatty acid + H(+). Its function is as follows. Snake venom phospholipase A2 (PLA2) that inhibits neuromuscular transmission by blocking acetylcholine release from the nerve termini. PLA2 catalyzes the calcium-dependent hydrolysis of the 2-acyl groups in 3-sn-phosphoglycerides. The chain is Basic phospholipase A2 DAV-N6 from Deinagkistrodon acutus (Hundred-pace snake).